The sequence spans 152 residues: UPF0225 protein YchJ (152 aa).

This sequence belongs to the UPF0225 family.

This is UPF0225 protein YchJ (ychJ) from Salmonella typhimurium (strain LT2 / SGSC1412 / ATCC 700720).